A 508-amino-acid chain; its full sequence is Cytochrome P450 monooxygenase BipB (508 aa).

The helical transmembrane segment at 11–31 (ELAWLLLGPLVLFYVFKLFIY) threads the bilayer. Position 448 (Cys448) interacts with heme.

This sequence belongs to the cytochrome P450 family. The cofactor is heme.

The protein localises to the membrane. It functions in the pathway sesquiterpene biosynthesis. In terms of biological role, cytochrome P450 monooxygenase; part of the minimal biosynthetic bip cluster that mediates the biosynthesis of bridged polycyclic sesquiterpenoids derived from sativene, isosativene, and longifolene. The sesquiterpene cyclase BipA acts as a versatile cyclase that converts farnesyl diphosphate (FPP) into (-)-sativene as the dominant product and (-)-isosativene and (-)-longifolene as minor ones. The cytochrome P450 monooxygenase BipB then hydroxylates different enantiomeric sesquiterpenes, such as (-)-longifolene and (+)-longifolene, at C-15 and C-14. The C-15- or both C-15- and C-14-hydroxylated products are further oxidized by unclustered oxidases, resulting in a structurally diverse array of sesquiterpenoids. The BipB-catalyzed hydroxylation at C-15 serves as an initiator for the oxidation by the unclustered oxidases. This is Cytochrome P450 monooxygenase BipB from Cochliobolus sativus (Common root rot and spot blotch fungus).